Consider the following 157-residue polypeptide: UPF0262 protein Atu0536 (157 aa).

It belongs to the UPF0262 family.

This Agrobacterium fabrum (strain C58 / ATCC 33970) (Agrobacterium tumefaciens (strain C58)) protein is UPF0262 protein Atu0536.